Here is a 128-residue protein sequence, read N- to C-terminus: Ribosome-binding factor A (128 aa).

This sequence belongs to the RbfA family. In terms of assembly, monomer. Binds 30S ribosomal subunits, but not 50S ribosomal subunits or 70S ribosomes.

It is found in the cytoplasm. One of several proteins that assist in the late maturation steps of the functional core of the 30S ribosomal subunit. Associates with free 30S ribosomal subunits (but not with 30S subunits that are part of 70S ribosomes or polysomes). Required for efficient processing of 16S rRNA. May interact with the 5'-terminal helix region of 16S rRNA. This is Ribosome-binding factor A from Microcystis aeruginosa (strain NIES-843 / IAM M-2473).